The primary structure comprises 249 residues: Tetraspanin-18 (249 aa).

The Cytoplasmic segment spans residues 1-13 (MEGDCLSCMKYLM). A helical membrane pass occupies residues 14-34 (FVFNFFIFLGGACLLGIGIWV). The Extracellular segment spans residues 35–49 (MVDPTGFREIVAANP). Residues 50 to 70 (LLITGAYILLAMGGLLFLLGF) traverse the membrane as a helical segment. At 71-83 (LGCCGAVRENKCL) the chain is on the cytoplasmic side. The helical transmembrane segment at 84–104 (LLFFFLFILIIFLAELSAAIL) threads the bilayer. Topologically, residues 105–223 (AFIFRGNLTR…AFETYVYLAG (119 aa)) are extracellular. N-linked (GlcNAc...) asparagine glycosylation is found at Asn111 and Asn129. Residues 224–244 (ALAIGVLAIELFAMIFAMCLF) traverse the membrane as a helical segment. Over 245–249 (RGIIQ) the chain is Cytoplasmic.

The protein belongs to the tetraspanin (TM4SF) family. Interacts with ORAI1; this interaction regulates ORAI1 exit from the endoplasmic (ER), and/or Golgi, and trafficking to the cell surface.

It localises to the membrane. In terms of biological role, plays a role in the cell surface localization of ORAI1 and may participate in the regulation of Ca(2+) signaling and the VWF release in response to inflammatory stimuli. The protein is Tetraspanin-18 of Bos taurus (Bovine).